A 125-amino-acid polypeptide reads, in one-letter code: Large ribosomal subunit protein bL20 (125 aa).

It belongs to the bacterial ribosomal protein bL20 family.

Its function is as follows. Binds directly to 23S ribosomal RNA and is necessary for the in vitro assembly process of the 50S ribosomal subunit. It is not involved in the protein synthesizing functions of that subunit. The sequence is that of Large ribosomal subunit protein bL20 from Rhizorhabdus wittichii (strain DSM 6014 / CCUG 31198 / JCM 15750 / NBRC 105917 / EY 4224 / RW1) (Sphingomonas wittichii).